A 687-amino-acid polypeptide reads, in one-letter code: Chloride channel protein ClC-Ka (687 aa).

A run of 4 helical transmembrane segments spans residues 52–72 (FLMTLGVLMALISYAMNFALG), 161–181 (LFLGKVGPFVHLSVMIAAYLG), 202–222 (VAGAAVGVATVFAAPFSGVLF), and 236–256 (YWRGFFAATCGAFMFRLLAVF). Positions 259, 261, 278, and 281 each coordinate Ca(2+). 6 consecutive transmembrane segments (helical) span residues 282–302 (IFFFVLLGAICGVASCAYLYC), 325–345 (PLYAALAATVLASITYPPGVG), 396–416 (FTIFGTLAFFLVMKFWMLILA), 417–437 (TTIPMPAGYFLPIFIIGAAIG), 452–472 (IVAGGVINPIMPGGYALAGAA), and 486–506 (LLAFELTGQIVHALPVLMAVL). Residues 507–687 (AANAIAQSCQ…SALTNPPPAK (181 aa)) are Cytoplasmic-facing. CBS domains are found at residues 551–612 (MRRA…ARAS) and 628–686 (TEPV…PPPA).

It belongs to the chloride channel (TC 2.A.49) family. CLCNKA subfamily. In terms of assembly, homodimer. Interacts with BSND. Expressed predominantly in the kidney.

It localises to the basolateral cell membrane. The enzyme catalyses chloride(in) = chloride(out). It catalyses the reaction bromide(in) = bromide(out). The catalysed reaction is nitrate(in) = nitrate(out). It carries out the reaction iodide(out) = iodide(in). Anion-selective channel permeable to small monovalent anions with ion selectivity for chloride &gt; bromide &gt; nitrate &gt; iodide. Forms a homodimeric channel where each subunit has its own ion conduction pathway. May conduct double-barreled currents controlled by two types of gates, two fast gates that control each subunit independently and a slow common gate that opens and shuts off both subunits simultaneously. Assembles with the regulatory subunit BSND/Barttin for sorting at the basolateral plasma membrane domain and functional switch to the ion conducting state. CLCNKA:BSND channels display mostly a linear current-voltage relationship with fast gating at negative potentials. Mediates transepithelial chloride transport from the lumen to interstitial compartment along the thin ascending limb of Henle's loop, contributing to generation of hypertonic medullary interstitium as a countercurrent system to achieve urine concentration. Conducts chloride currents in the stria vascularis of the inner ear to establish the endocochlear potential necessary for normal hearing. In Oryctolagus cuniculus (Rabbit), this protein is Chloride channel protein ClC-Ka (CLCNKA).